Reading from the N-terminus, the 201-residue chain is Protein TraJ (201 aa).

The protein resides in the cytoplasm. In terms of biological role, this protein is essential for positively regulating the expression of transfer genes that are involved in the conjugal transfer of DNA between bacterial cells. This Escherichia coli protein is Protein TraJ (traJ).